Consider the following 188-residue polypeptide: PRA1 family protein 3 (188 aa).

Met-1 carries the N-acetylmethionine modification. The Cytoplasmic portion of the chain corresponds to 1–35 (MDVNLAPLRAWDDFFPGSDRFARPDFRDISKWNNR). Transmembrane regions (helical) follow at residues 36-56 (VVSN…MMIS) and 57-77 (VVGF…VLVF). The Cytoplasmic portion of the chain corresponds to 78–92 (TGFVWAAHNKDILRR). 2 consecutive transmembrane segments (helical) span residues 93 to 113 (MKKQ…YFLI) and 115 to 135 (MFGG…LMFI). Positions 103–117 (MVVMLASYFLISMFG) are required for homodimer formation and heterodimer formation with ARL6IP1. Over 136-188 (HASLRLRNLKNKLENKMEGIGLKKTPMGIILDALEQQEDSINKFADYISKARE) the chain is Cytoplasmic. Residues 136 to 188 (HASLRLRNLKNKLENKMEGIGLKKTPMGIILDALEQQEDSINKFADYISKARE) form a targeting to endoplasmic reticulum membrane region.

This sequence belongs to the PRA1 family. As to quaternary structure, homodimer. Heterodimer with ARL6IP1. Forms multimers. Interacts with ARL6. Interacts with prenylated RAB1A and RAB3A. Interacts with SLC1A1/EAAC1. Interacts with RTN2 (via first transmembrane domain). Does not interact with VAMP1, VAMP2 or VAMP3. As to expression, ubiquitous. Most abundant in heart and brain. In the embryonic brain cortex, expressed in neurons and astrocytes.

Its subcellular location is the endoplasmic reticulum membrane. The protein localises to the cell membrane. The protein resides in the cytoplasm. It is found in the cytoskeleton. In terms of biological role, regulates intracellular concentrations of taurine and glutamate. Negatively modulates SLC1A1/EAAC1 glutamate transport activity by decreasing its affinity for glutamate in a PKC activity-dependent manner. Plays a role in the retention of SLC1A1/EAAC1 in the endoplasmic reticulum. The protein is PRA1 family protein 3 (Arl6ip5) of Rattus norvegicus (Rat).